A 133-amino-acid chain; its full sequence is Small ribosomal subunit protein uS11 (133 aa).

It belongs to the universal ribosomal protein uS11 family. As to quaternary structure, part of the 30S ribosomal subunit. Interacts with proteins S7 and S18. Binds to IF-3.

Located on the platform of the 30S subunit, it bridges several disparate RNA helices of the 16S rRNA. Forms part of the Shine-Dalgarno cleft in the 70S ribosome. This is Small ribosomal subunit protein uS11 from Ralstonia pickettii (strain 12J).